Consider the following 229-residue polypeptide: UPF0173 metal-dependent hydrolase RD1_1994 (229 aa).

This sequence belongs to the UPF0173 family.

The protein is UPF0173 metal-dependent hydrolase RD1_1994 of Roseobacter denitrificans (strain ATCC 33942 / OCh 114) (Erythrobacter sp. (strain OCh 114)).